A 386-amino-acid chain; its full sequence is 4-hydroxy-3-methylbut-2-en-1-yl diphosphate synthase (flavodoxin) (386 aa).

The [4Fe-4S] cluster site is built by Cys281, Cys284, Cys316, and Glu323.

The protein belongs to the IspG family. The cofactor is [4Fe-4S] cluster.

It catalyses the reaction (2E)-4-hydroxy-3-methylbut-2-enyl diphosphate + oxidized [flavodoxin] + H2O + 2 H(+) = 2-C-methyl-D-erythritol 2,4-cyclic diphosphate + reduced [flavodoxin]. It participates in isoprenoid biosynthesis; isopentenyl diphosphate biosynthesis via DXP pathway; isopentenyl diphosphate from 1-deoxy-D-xylulose 5-phosphate: step 5/6. Converts 2C-methyl-D-erythritol 2,4-cyclodiphosphate (ME-2,4cPP) into 1-hydroxy-2-methyl-2-(E)-butenyl 4-diphosphate. The sequence is that of 4-hydroxy-3-methylbut-2-en-1-yl diphosphate synthase (flavodoxin) from Corynebacterium jeikeium (strain K411).